Consider the following 400-residue polypeptide: NADH dehydrogenase-like protein Rv1812c (400 aa).

This sequence belongs to the NADH dehydrogenase family. FAD is required as a cofactor.

This chain is NADH dehydrogenase-like protein Rv1812c, found in Mycobacterium tuberculosis (strain ATCC 25618 / H37Rv).